A 510-amino-acid chain; its full sequence is Probable cytochrome P450 4d20 (510 aa).

Position 455 (Cys-455) interacts with heme.

Belongs to the cytochrome P450 family. It depends on heme as a cofactor.

The protein localises to the endoplasmic reticulum membrane. It is found in the microsome membrane. In terms of biological role, may be involved in the metabolism of insect hormones and in the breakdown of synthetic insecticides. The polypeptide is Probable cytochrome P450 4d20 (Cyp4d20) (Drosophila melanogaster (Fruit fly)).